The following is a 117-amino-acid chain: Hydrogenase maturation factor HypA (117 aa).

His-2 lines the Ni(2+) pocket. The Zn(2+) site is built by Cys-73, Cys-76, Cys-89, and Cys-92.

Belongs to the HypA/HybF family.

In terms of biological role, involved in the maturation of [NiFe] hydrogenases. Required for nickel insertion into the metal center of the hydrogenase. The protein is Hydrogenase maturation factor HypA of Chlorobium luteolum (strain DSM 273 / BCRC 81028 / 2530) (Pelodictyon luteolum).